A 429-amino-acid polypeptide reads, in one-letter code: Protein FAM98B (429 aa).

Positions 304-429 (RVPDRGGRPN…GGGGGGYRRY (126 aa)) are disordered. Positions 305–314 (VPDRGGRPNE) are enriched in basic and acidic residues. Over residues 332–429 (GGRGGWGGGG…GGGGGGYRRY (98 aa)) the composition is skewed to gly residues.

Belongs to the FAM98 family. Homodimer. Component of a tRNA-splicing ligase complex. Interacts with FAM98A.

The protein resides in the nucleus. It is found in the cytoplasm. In terms of biological role, positively stimulates PRMT1-induced protein arginine dimethylated arginine methylation. In Mus musculus (Mouse), this protein is Protein FAM98B (Fam98b).